The primary structure comprises 67 residues: Mitotic-spindle organizing protein 1A (67 aa).

Belongs to the MOZART1 family. As to quaternary structure, part of the gamma-tubulin complex. Interacts with GIP1 and GCP3. As to expression, mostly expressed in siliques and flowers, and, to a lower extent, in leaves, roots and seedlings, with highest levels in young tissues, meristematic cells, and the vasculature.

It localises to the cytoplasm. It is found in the cytoskeleton. Its subcellular location is the microtubule organizing center. The protein localises to the spindle. The protein resides in the nucleus. It localises to the phragmoplast. It is found in the nucleus envelope. In terms of biological role, required for gamma-tubulin complex recruitment to the microtubule organizing centers (MTOCs). During mitosis, modulates gamma-tubulin complex localization, spindle stability and chromosomal segregation. Necessary for gametophyte development and embryogenesis. The protein is Mitotic-spindle organizing protein 1A (GIP2) of Arabidopsis thaliana (Mouse-ear cress).